Reading from the N-terminus, the 392-residue chain is DNA replication and repair protein RecF (392 aa).

30-37 (GPNAAGKT) is a binding site for ATP.

It belongs to the RecF family.

It is found in the cytoplasm. In terms of biological role, the RecF protein is involved in DNA metabolism; it is required for DNA replication and normal SOS inducibility. RecF binds preferentially to single-stranded, linear DNA. It also seems to bind ATP. This chain is DNA replication and repair protein RecF, found in Chloroflexus aggregans (strain MD-66 / DSM 9485).